The sequence spans 192 residues: MNATTEPFTPSADLAKPSVADAVVGHEASPLFIRKPSPDDGWGIYELVKSCPPLDVNSAYAYLLLATQFRDSCAVATNEEGEIVGFVSGYVKSNAPDTYFLWQVAVGEKARGTGLARRLVEAVMTRPEMAEVHHLETTITPDNQASWGLFRRLADRWQAPLNSREYFSTDQLGGEHDPENLVRIGPFQTDQI.

The region spanning 31-192 is the N-acetyltransferase domain; that stretch reads LFIRKPSPDD…RIGPFQTDQI (162 aa).

Belongs to the acetyltransferase family. EctA subfamily.

The catalysed reaction is L-2,4-diaminobutanoate + acetyl-CoA = (2S)-4-acetamido-2-aminobutanoate + CoA + H(+). The protein operates within amine and polyamine biosynthesis; ectoine biosynthesis; L-ectoine from L-aspartate 4-semialdehyde: step 2/3. Its function is as follows. Catalyzes the acetylation of L-2,4-diaminobutyrate (DABA) to gamma-N-acetyl-alpha,gamma-diaminobutyric acid (ADABA) with acetyl coenzyme A. Does not acetylate amino acids like GABA, L-ornithine, L-lysine and L-aspartate. This Halomonas elongata (strain ATCC 33173 / DSM 2581 / NBRC 15536 / NCIMB 2198 / 1H9) protein is L-2,4-diaminobutyric acid acetyltransferase (ectA).